Reading from the N-terminus, the 180-residue chain is Probable nicotinate-nucleotide adenylyltransferase (180 aa).

The protein belongs to the NadD family.

The catalysed reaction is nicotinate beta-D-ribonucleotide + ATP + H(+) = deamido-NAD(+) + diphosphate. It functions in the pathway cofactor biosynthesis; NAD(+) biosynthesis; deamido-NAD(+) from nicotinate D-ribonucleotide: step 1/1. Its function is as follows. Catalyzes the reversible adenylation of nicotinate mononucleotide (NaMN) to nicotinic acid adenine dinucleotide (NaAD). This is Probable nicotinate-nucleotide adenylyltransferase from Pelagibacter ubique (strain HTCC1062).